Here is a 70-residue protein sequence, read N- to C-terminus: DNA gyrase inhibitor YacG (70 aa).

Zn(2+)-binding residues include C9, C12, C28, and C32. A disordered region spans residues 44–70 (SRKIPGSSIDPESIVTTNNKQDNVDEQ).

The protein belongs to the DNA gyrase inhibitor YacG family. In terms of assembly, interacts with GyrB. Requires Zn(2+) as cofactor.

In terms of biological role, inhibits all the catalytic activities of DNA gyrase by preventing its interaction with DNA. Acts by binding directly to the C-terminal domain of GyrB, which probably disrupts DNA binding by the gyrase. This is DNA gyrase inhibitor YacG from Legionella pneumophila subsp. pneumophila (strain Philadelphia 1 / ATCC 33152 / DSM 7513).